We begin with the raw amino-acid sequence, 177 residues long: Large ribosomal subunit protein uL6 (177 aa).

The protein belongs to the universal ribosomal protein uL6 family. Part of the 50S ribosomal subunit.

Functionally, this protein binds to the 23S rRNA, and is important in its secondary structure. It is located near the subunit interface in the base of the L7/L12 stalk, and near the tRNA binding site of the peptidyltransferase center. This Actinobacillus succinogenes (strain ATCC 55618 / DSM 22257 / CCUG 43843 / 130Z) protein is Large ribosomal subunit protein uL6.